A 465-amino-acid polypeptide reads, in one-letter code: MTPFLPDRSIAKRFDAAADRYEHHAWAQRHAAEALAERIAALALPAKPRILEIGCGTGLLTRALARRLGPADWTLSDIAPDMLRQARANLNLPARYLRMDGEHPAGLDGQYDLICSSLAVQWFGDLNAGLARLTRWLRPGGHLAIATLAQESFKEWHQAHAVLSLRAATPEYPPVADIRAGLLPGRVDSEQHVQSHHSGLAFLRGLKGIGATAPRAGHQPLNTAQLRAVLRQFDRQGACVTYQFAYGQWRKPRGVFVTGTDTGVGKTLVSALLTRAWQADYWKPLQTGLAEESGDSATVAALARLPPERLHAPAYALQAPLAPWAAASLENTCIDATRLTLPETAAPLVVEGAGGLYVPIDERSLIIDLIDNLGLPVVLAARSGLGTINHTLLSLEALRARKLPVLGVIMSGPPSDDNRRAIEHFGRIPVLAQIPQLDVVDAQAVDLWSKQLPTLDSLLSSNASR.

The tract at residues 1–254 (MTPFLPDRSI…AYGQWRKPRG (254 aa)) is malonyl-ACP O-methyltransferase. ATP-binding positions include Asp234 and 263–268 (GVGKTL). Residues 255 to 465 (VFVTGTDTGV…DSLLSSNASR (211 aa)) form a DTB synthetase region. Mg(2+) is bound at residue Thr267. The active site involves Lys283. Thr287 contributes to the substrate binding site. ATP is bound by residues Asp295, 351 to 354 (EGAG), and 435 to 437 (PQL). The Mg(2+) site is built by Asp295 and Glu351.

In the N-terminal section; belongs to the methyltransferase superfamily. It in the C-terminal section; belongs to the dethiobiotin synthetase family. It depends on Mg(2+) as a cofactor.

The protein localises to the cytoplasm. It carries out the reaction (7R,8S)-7,8-diammoniononanoate + CO2 + ATP = (4R,5S)-dethiobiotin + ADP + phosphate + 3 H(+). It catalyses the reaction malonyl-[ACP] + S-adenosyl-L-methionine = malonyl-[ACP] methyl ester + S-adenosyl-L-homocysteine. It participates in cofactor biosynthesis; biotin biosynthesis; biotin from 7,8-diaminononanoate: step 1/2. It functions in the pathway cofactor biosynthesis; biotin biosynthesis. Its function is as follows. Converts the free carboxyl group of a malonyl-thioester to its methyl ester by transfer of a methyl group from S-adenosyl-L-methionine (SAM). It allows synthesis of pimeloyl-ACP via the fatty acid synthetic pathway. In terms of biological role, catalyzes a mechanistically unusual reaction, the ATP-dependent insertion of CO2 between the N7 and N8 nitrogen atoms of 7,8-diaminopelargonic acid (DAPA, also called 7,8-diammoniononanoate) to form a ureido ring. This is Biotin biosynthesis bifunctional protein BioCD from Bordetella avium (strain 197N).